Here is a 900-residue protein sequence, read N- to C-terminus: Nuclear factor NF-kappa-B p100 subunit (900 aa).

A phosphoserine mark is found at S23 and S161. The RHD domain occupies 38 to 343 (PYLVIVEQPK…EVQRKRRKAL (306 aa)). The Nuclear localization signal motif lies at 337 to 341 (RKRRK). The GRR stretch occupies residues 346-377 (FSQPFGGGSHMGGGSGGAAGGYGGAGGGGSLG). The tract at residues 404-435 (GAQMAATVPSRDSGEEAAEPSAPSRTPQCEPQ) is disordered. Residue T429 is modified to Phosphothreonine. 6 ANK repeats span residues 487–519 (NGDT…DLGV), 526–555 (LHQT…DPAL), 559–591 (HGDS…AVPQ), 599–628 (EGLY…EVEA), 633–663 (GGRT…NVNA), and 667–696 (AGNT…DIHA). The tract at residues 698–734 (NEEPLCPLPSPPTSDSDSDSEGPEKDTRSSFRGHTPL) is disordered. 3 positions are modified to phosphoserine: S713, S715, and S717. An ANK 7 repeat occupies 729 to 758 (RGHTPLDLTCSTKVKTLLLNAAQNTMEPPL). The Death domain maps to 764 to 851 (AGPGLSLGDT…EGVRLLRGPE (88 aa)). S812 is subject to Phosphoserine. The span at 849–866 (GPETRDKLPSTAEVKEDS) shows a compositional bias: basic and acidic residues. The interval 849–900 (GPETRDKLPSTAEVKEDSAYGSQSVEQEAEKLGPPPEPPGGLCHGHPQPQVH) is disordered. A Glycyl lysine isopeptide (Lys-Gly) (interchain with G-Cter in ubiquitin) cross-link involves residue K855. Phosphoserine; by MAP3K14 is present on residues S866 and S870. A compositionally biased stretch (low complexity) spans 888–900 (GGLCHGHPQPQVH).

In terms of assembly, component of the NF-kappa-B RelB-p52 complex. Homodimer; component of the NF-kappa-B p52-p52 complex. Component of the NF-kappa-B p65-p52 complex. Component of the NF-kappa-B p52-c-Rel complex. NFKB2/p52 interacts with NFKBIE. Component of a complex consisting of the NF-kappa-B p50-p50 homodimer and BCL3. Directly interacts with MEN1. While translation occurs, the particular unfolded structure after the GRR repeat promotes the generation of p52 making it an acceptable substrate for the proteasome. This process is known as cotranslational processing. The processed form is active and the unprocessed form acts as an inhibitor (I kappa B-like), being able to form cytosolic complexes with NF-kappa B, trapping it in the cytoplasm. Complete folding of the region downstream of the GRR repeat precludes processing. Post-translationally, subsequent to MAP3K14-dependent serine phosphorylation, p100 polyubiquitination occurs then triggering its proteasome-dependent processing. In terms of processing, constitutive processing is tightly suppressed by its C-terminal processing inhibitory domain, named PID, which contains the death domain. Ubiquitinated by TRIM55; leading to processing by VCP and subsequent ubiquitin-dependent protein degradation by the proteasome.

The protein resides in the nucleus. It is found in the cytoplasm. Functionally, NF-kappa-B is a pleiotropic transcription factor present in almost all cell types and is the endpoint of a series of signal transduction events that are initiated by a vast array of stimuli related to many biological processes such as inflammation, immunity, differentiation, cell growth, tumorigenesis and apoptosis. NF-kappa-B is a homo- or heterodimeric complex formed by the Rel-like domain-containing proteins RELA/p65, RELB, NFKB1/p105, NFKB1/p50, REL and NFKB2/p52. The dimers bind at kappa-B sites in the DNA of their target genes and the individual dimers have distinct preferences for different kappa-B sites that they can bind with distinguishable affinity and specificity. Different dimer combinations act as transcriptional activators or repressors, respectively. NF-kappa-B is controlled by various mechanisms of post-translational modification and subcellular compartmentalization as well as by interactions with other cofactors or corepressors. NF-kappa-B complexes are held in the cytoplasm in an inactive state complexed with members of the NF-kappa-B inhibitor (I-kappa-B) family. In a conventional activation pathway, I-kappa-B is phosphorylated by I-kappa-B kinases (IKKs) in response to different activators, subsequently degraded thus liberating the active NF-kappa-B complex which translocates to the nucleus. In a non-canonical activation pathway, the MAP3K14-activated CHUK/IKKA homodimer phosphorylates NFKB2/p100 associated with RelB, inducing its proteolytic processing to NFKB2/p52 and the formation of NF-kappa-B RelB-p52 complexes. The NF-kappa-B heterodimeric RelB-p52 complex is a transcriptional activator. The NF-kappa-B p52-p52 homodimer is a transcriptional repressor. NFKB2 appears to have dual functions such as cytoplasmic retention of attached NF-kappa-B proteins by p100 and generation of p52 by a cotranslational processing. The proteasome-mediated process ensures the production of both p52 and p100 and preserves their independent function. p52 binds to the kappa-B consensus sequence 5'-GGRNNYYCC-3', located in the enhancer region of genes involved in immune response and acute phase reactions. p52 and p100 are respectively the minor and major form; the processing of p100 being relatively poor. Isoform p49 is a subunit of the NF-kappa-B protein complex, which stimulates the HIV enhancer in synergy with p65. In concert with RELB, regulates the circadian clock by repressing the transcriptional activator activity of the CLOCK-BMAL1 heterodimer. The protein is Nuclear factor NF-kappa-B p100 subunit (NFKB2) of Homo sapiens (Human).